Consider the following 126-residue polypeptide: MLLSRAISVLALLACIRCGVHAQNTEQNLKTQLTTDSAMITSQRLLRTSVDFKDSEERWPTESSRIRSAIKDYFREFPEKVSIAMAIRQIDAHGVRHVEKVLSQYKFPAADQGNIRLAIIHHKAPK.

Positions 1–22 are cleaved as a signal peptide; the sequence is MLLSRAISVLALLACIRCGVHA. The RxLR-dEER signature appears at 44–58; that stretch reads RLLRTSVDFKDSEER.

This sequence belongs to the RxLR effector family.

It is found in the secreted. The protein localises to the host cell. Secreted effector that triggers a hypersensitive response (HR) in 3 Lactuca saligna accessions (CGN05947, CGN05310, CGN05304). This is RxLR effector protein BLR31 from Bremia lactucae (Lettuce downy mildew).